The following is a 295-amino-acid chain: 33 kDa chaperonin (295 aa).

2 disulfides stabilise this stretch: cysteine 237-cysteine 239 and cysteine 270-cysteine 273.

Belongs to the HSP33 family. In terms of processing, under oxidizing conditions two disulfide bonds are formed involving the reactive cysteines. Under reducing conditions zinc is bound to the reactive cysteines and the protein is inactive.

It is found in the cytoplasm. Its function is as follows. Redox regulated molecular chaperone. Protects both thermally unfolding and oxidatively damaged proteins from irreversible aggregation. Plays an important role in the bacterial defense system toward oxidative stress. The polypeptide is 33 kDa chaperonin (Lactiplantibacillus plantarum (strain ATCC BAA-793 / NCIMB 8826 / WCFS1) (Lactobacillus plantarum)).